The sequence spans 112 residues: Large ribosomal subunit protein uL24 (112 aa).

Belongs to the universal ribosomal protein uL24 family. In terms of assembly, part of the 50S ribosomal subunit.

Its function is as follows. One of two assembly initiator proteins, it binds directly to the 5'-end of the 23S rRNA, where it nucleates assembly of the 50S subunit. One of the proteins that surrounds the polypeptide exit tunnel on the outside of the subunit. This chain is Large ribosomal subunit protein uL24, found in Magnetococcus marinus (strain ATCC BAA-1437 / JCM 17883 / MC-1).